We begin with the raw amino-acid sequence, 808 residues long: MVKFMKIKSIAAKNLLSFDDFKITFEDGDVVTIFGPNNVGKTNLFRVLKLLRNIINEKISAVDLEIYLHNKNLKAAKIEVDVIFDKSDKEVIAKFLKIFFKINAPDLIRLCNNLKLNIINSIIDYFSAGSYIWECSELRCYRPYFMLRLRSLEEDIEKIKIYLKERELSEITPDLIDHSKVIHELDRNVEIIEVTNDLKNIITSSVNALITIYEKNEKLFFSTLIDGKENITTRIGDGNIENIVEISMKDFTKDIEKYEDCFKRLTMDKNILRAFVVLLALDKLLANKMSIYVKKVLEYSKENPWDKEIIEDLKYIVRFCGFDYRDIYEISDISLNDILLKIYENSLIFYEDYLPNEGKVMIPDYMIVELLAGLKNNSLEKNVKSKILELFKTSTTKDDLYLGILSMPSEKWIPSYLFYLKNNANLKLRKRYMKIKEMFEYIFNSGSLSFDVILANNKPDIVVYSEDIEIPLNMVGLGVKKILEILTLVFGYESKVILLDTPFNQLYPKYQKRFSKILKDTENIDSQVFIILHSPYFINNENIFNTFRFYKPKKSTKYICIGSIIKDLEKTFGTVILDRTTRKILLSDAVILLSSALRDIPLFDLAEYEDIPIDEYNIEVIRPQNTLSFGKYYALLQYTSIPYILMLRSWILYNLYEEIKDGEGKVRYKLLEKGKYHKIVEERLNFFKNRHPFWISKEEFDKVINIYIKTLEAHREKLIELGYIYLSSKEEVVKYCIEPLRKQLEDILRKKLFIFTVPTDFIIEPQDLKNIQIEKDKYIVHNYIGYRKDVLKEFKEFFDYFVKFHNLQ.

ATP is bound at residue 35–42 (GPNNVGKT).

This is an uncharacterized protein from Methanocaldococcus jannaschii (strain ATCC 43067 / DSM 2661 / JAL-1 / JCM 10045 / NBRC 100440) (Methanococcus jannaschii).